The primary structure comprises 237 residues: N-(5'-phosphoribosyl)anthranilate isomerase (237 aa).

This sequence belongs to the TrpF family.

The catalysed reaction is N-(5-phospho-beta-D-ribosyl)anthranilate = 1-(2-carboxyphenylamino)-1-deoxy-D-ribulose 5-phosphate. It participates in amino-acid biosynthesis; L-tryptophan biosynthesis; L-tryptophan from chorismate: step 3/5. The polypeptide is N-(5'-phosphoribosyl)anthranilate isomerase (Desulfitobacterium hafniense (strain Y51)).